Consider the following 112-residue polypeptide: ATP synthase epsilon chain (112 aa).

Belongs to the ATPase epsilon chain family. As to quaternary structure, F-type ATPases have 2 components, CF(1) - the catalytic core - and CF(0) - the membrane proton channel. CF(1) has five subunits: alpha(3), beta(3), gamma(1), delta(1), epsilon(1). CF(0) has three main subunits: a, b and c.

It localises to the cell inner membrane. Functionally, produces ATP from ADP in the presence of a proton gradient across the membrane. This chain is ATP synthase epsilon chain (atpC), found in Rickettsia conorii (strain ATCC VR-613 / Malish 7).